We begin with the raw amino-acid sequence, 206 residues long: Ribosomal RNA small subunit methyltransferase G (206 aa).

S-adenosyl-L-methionine-binding positions include Gly73, Leu78, 124 to 125 (VE), and Arg139.

It belongs to the methyltransferase superfamily. RNA methyltransferase RsmG family.

It is found in the cytoplasm. It catalyses the reaction guanosine(527) in 16S rRNA + S-adenosyl-L-methionine = N(7)-methylguanosine(527) in 16S rRNA + S-adenosyl-L-homocysteine. Specifically methylates the N7 position of guanine in position 527 of 16S rRNA. The polypeptide is Ribosomal RNA small subunit methyltransferase G (Yersinia enterocolitica serotype O:8 / biotype 1B (strain NCTC 13174 / 8081)).